A 354-amino-acid chain; its full sequence is Probable L-ascorbate-6-phosphate lactonase UlaG (354 aa).

This sequence belongs to the UlaG family. It depends on a divalent metal cation as a cofactor.

It localises to the cytoplasm. The enzyme catalyses L-ascorbate 6-phosphate + H2O = 3-dehydro-L-gulonate 6-phosphate. Its pathway is cofactor degradation; L-ascorbate degradation; D-xylulose 5-phosphate from L-ascorbate: step 1/4. Its function is as follows. Probably catalyzes the hydrolysis of L-ascorbate-6-P into 3-keto-L-gulonate-6-P. Is essential for L-ascorbate utilization under anaerobic conditions. This chain is Probable L-ascorbate-6-phosphate lactonase UlaG, found in Shigella flexneri.